Here is a 264-residue protein sequence, read N- to C-terminus: 3-methyl-2-oxobutanoate hydroxymethyltransferase (264 aa).

Positions 44 and 83 each coordinate Mg(2+). Residues 44–45, D83, and K111 each bind 3-methyl-2-oxobutanoate; that span reads DS. E113 lines the Mg(2+) pocket. Catalysis depends on E180, which acts as the Proton acceptor.

It belongs to the PanB family. As to quaternary structure, homodecamer; pentamer of dimers. Mg(2+) serves as cofactor.

The protein localises to the cytoplasm. It carries out the reaction 3-methyl-2-oxobutanoate + (6R)-5,10-methylene-5,6,7,8-tetrahydrofolate + H2O = 2-dehydropantoate + (6S)-5,6,7,8-tetrahydrofolate. It participates in cofactor biosynthesis; (R)-pantothenate biosynthesis; (R)-pantoate from 3-methyl-2-oxobutanoate: step 1/2. Catalyzes the reversible reaction in which hydroxymethyl group from 5,10-methylenetetrahydrofolate is transferred onto alpha-ketoisovalerate to form ketopantoate. The sequence is that of 3-methyl-2-oxobutanoate hydroxymethyltransferase from Marinobacter nauticus (strain ATCC 700491 / DSM 11845 / VT8) (Marinobacter aquaeolei).